The following is a 646-amino-acid chain: Translation initiation factor IF-2 (646 aa).

A tr-type G domain is found at Pro146–Arg315. A G1 region spans residues Gly155–Thr162. Gly155 to Thr162 contributes to the GTP binding site. Residues Gly180–His184 form a G2 region. Residues Asp201–Gly204 form a G3 region. Residues Asp201–His205 and Asn255–Asp258 each bind GTP. Residues Asn255 to Asp258 are G4. The interval Ser291–Lys293 is G5.

This sequence belongs to the TRAFAC class translation factor GTPase superfamily. Classic translation factor GTPase family. IF-2 subfamily.

The protein resides in the cytoplasm. One of the essential components for the initiation of protein synthesis. Protects formylmethionyl-tRNA from spontaneous hydrolysis and promotes its binding to the 30S ribosomal subunits. Also involved in the hydrolysis of GTP during the formation of the 70S ribosomal complex. This is Translation initiation factor IF-2 from Clostridioides difficile (strain 630) (Peptoclostridium difficile).